The sequence spans 633 residues: MPEISLRHVVSGSSQDSTHCAENLLKADTYRKWRAATAGEKTISVVLQLEKEEQIHSIDIGNDGSAFVEVLVTRSAGGGGATAIEQDYEVLLVTSSFMSPSESRSGSNPNRVRMFGPDKLVRAAAEKRWDRVKIVCSQPYSKDSPYGLSFVRFHSPPDKDEAETPSQKGTVTKLGQFRVKEEDDGASSLKPGALFFSRINKTSSASARGPAGPSYAAATLQASNATSSASSVSKALGSSCKPQESPKGKRKLDLNLEDRRPASKPSAGPPTLKRPKLTVPSRSPAAAAASTPAQKAAPGKPREGTEPRGARAGPQELGKILQGVVVVLSGFQNPFRSELRDKALELGAKYRPDWTPDSTHLICAFANTPKYSQVLGLGGRIVRKEWVLDCYRLRRRLPSRRYLMAGLGSSSEDEEDDSPGESGEDEAPKLSRKRPQAKAKTQAAGPSSPQRPPTPKETKSPSPEPQDNSDTEGEQSEGQDNGAEDSGDTEDELRRVAEQREQRQPPAPGENGEDPYAGSTDENTDNEASTEADLPIPELPDFFQGKHFFLYGEFPGDERRKLIRYVTAFNGELEDYMSERVQFVITAQEWDPIFEEALMENPSLAFVRPRWIYSCNEKQKLLPHQLYGVVPQA.

A Phosphoserine modification is found at Ser-144. The segment at 151–172 is disordered; it reads VRFHSPPDKDEAETPSQKGTVT. Lys-180 participates in a covalent cross-link: Glycyl lysine isopeptide (Lys-Gly) (interchain with G-Cter in SUMO1); alternate. Residue Lys-180 forms a Glycyl lysine isopeptide (Lys-Gly) (interchain with G-Cter in SUMO2); alternate linkage. A Phosphothreonine modification is found at Thr-202. A phosphoserine mark is found at Ser-203, Ser-230, Ser-245, and Ser-263. Residues 234–316 form a disordered region; sequence KALGSSCKPQ…PRGARAGPQE (83 aa). The segment covering 244 to 261 has biased composition (basic and acidic residues); sequence ESPKGKRKLDLNLEDRRP. A compositionally biased stretch (low complexity) spans 280-298; sequence PSRSPAAAAASTPAQKAAP. Residues 300-309 are compositionally biased toward basic and acidic residues; that stretch reads KPREGTEPRG. One can recognise a BRCT 1 domain in the interval 316–404; the sequence is ELGKILQGVV…RRLPSRRYLM (89 aa). A phosphoserine mark is found at Ser-372, Ser-409, Ser-410, Ser-411, Ser-447, and Ser-448. A disordered region spans residues 407–538; sequence LGSSSEDEED…STEADLPIPE (132 aa). The span at 411–425 shows a compositional bias: acidic residues; sequence SEDEEDDSPGESGED. 2 positions are modified to phosphothreonine: Thr-454 and Thr-458. Phosphoserine is present on residues Ser-462 and Ser-486. Residues 467 to 491 are compositionally biased toward acidic residues; that stretch reads DNSDTEGEQSEGQDNGAEDSGDTED. Thr-489 carries the post-translational modification Phosphothreonine. Over residues 492-503 the composition is skewed to basic and acidic residues; that stretch reads ELRRVAEQREQR. Position 519 is a phosphoserine (Ser-519). Phosphothreonine occurs at positions 520 and 524. Positions 538–629 constitute a BRCT 2 domain; it reads ELPDFFQGKH…KLLPHQLYGV (92 aa).

Homodimer. Interacts with polynucleotide kinase (PNK), DNA polymerase-beta (POLB) and DNA ligase III (LIG3). Interacts with APTX and APLF. Interacts with APEX1; the interaction is induced by SIRT1 and increases with the acetylated form of APEX1. Interacts with (poly-ADP-ribosylated) PARP1. Phosphorylation of Ser-372 causes dimer dissociation. Phosphorylation by CK2 promotes interaction with APTX and APLF. In terms of processing, sumoylated.

It localises to the nucleus. Its subcellular location is the chromosome. Its function is as follows. Scaffold protein involved in DNA single-strand break repair by mediating the assembly of DNA break repair protein complexes. Negatively regulates ADP-ribosyltransferase activity of PARP1 during base-excision repair in order to prevent excessive PARP1 activity. Recognizes and binds poly-ADP-ribose chains: specifically binds auto-poly-ADP-ribosylated PARP1, limiting its activity. The polypeptide is DNA repair protein XRCC1 (XRCC1) (Cricetulus griseus (Chinese hamster)).